The primary structure comprises 837 residues: Tuftelin-interacting protein 11 (837 aa).

Basic and acidic residues-rich tracts occupy residues 1–13 and 53–64; these read MSLS…GEGR and VWAERDSDDERP. Disordered stretches follow at residues 1–21, 53–72, and 85–133; these read MSLS…DDER, VWAE…KRAR, and LKKG…KGFA. The tract at residues 1 to 50 is required for interaction with DHX15; the sequence is MSLSHLYRDGEGRIDDDDDERENFEITDWDLQNEFNPNRQRHWQTKEEAT. Residues Ser2, Ser59, and Ser98 each carry the phosphoserine modification. Residues 91-102 show a composition bias toward acidic residues; the sequence is EEAELEDSDDEE. The span at 103–116 shows a compositional bias: basic and acidic residues; that stretch reads RPVKQDDFPKDFGP. Ser144 bears the Phosphoserine mark. A G-patch domain is found at 149 to 195; the sequence is TKGIGQKLLQKMGYVPGRGLGKNAQGIINPIEAKQRKGKGAVGAYGS. Residues 179 to 236 are disordered; the sequence is IEAKQRKGKGAVGAYGSERTTQSMQDFPVVDSEEEAEEEFQKELSQWRKDPSGSKKKP. Phosphoserine is present on Ser210. A compositionally biased stretch (basic and acidic residues) spans 217-231; the sequence is EFQKELSQWRKDPSG. The Nuclear localization signal motif lies at 700–705; sequence VKDKFN. Positions 710-734 are required for nuclear speckle localization; that stretch reads IMNRAVSSNVGAYMQPGARENIAYL.

It belongs to the TFP11/STIP family. In terms of assembly, identified in the spliceosome C complex. Found in the Intron Large (IL) complex, a post-mRNA release spliceosomal complex containing the excised intron, U2, U5 and U6 snRNPs, and splicing factors. Interacts with TUFT1. Interacts with DHX15; indicative for a recruitment of DHX15 to the IL complex. Interacts with GCFC2.

The protein localises to the cytoplasm. The protein resides in the nucleus. Involved in pre-mRNA splicing, specifically in spliceosome disassembly during late-stage splicing events. Intron turnover seems to proceed through reactions in two lariat-intron associated complexes termed Intron Large (IL) and Intron Small (IS). In cooperation with DHX15 seems to mediate the transition of the U2, U5 and U6 snRNP-containing IL complex to the snRNP-free IS complex leading to efficient debranching and turnover of excised introns. May play a role in the differentiation of ameloblasts and odontoblasts or in the forming of the enamel extracellular matrix. The protein is Tuftelin-interacting protein 11 (TFIP11) of Macaca mulatta (Rhesus macaque).